The chain runs to 679 residues: Pollen receptor-like kinase 4 (679 aa).

Positions Met-1 to Ser-39 are cleaved as a signal peptide. 5 LRR repeats span residues Ile-118–Phe-141, Gly-142–Gly-165, His-167–Pro-191, Leu-193–Leu-217, and Ser-234–Ser-257. The segment covering Leu-252–Pro-269 has biased composition (low complexity). The interval Leu-252–Glu-271 is disordered. Residues Phe-278–Val-298 traverse the membrane as a helical segment. The interval Ser-311–Ser-344 is disordered. Positions Asp-319–Ala-336 are enriched in basic and acidic residues. A Protein kinase domain is found at Arg-372–Leu-646. Residue Ser-374 is modified to Phosphoserine. Residues Leu-378–Ser-386 and Lys-400 contribute to the ATP site. A phosphoserine mark is found at Ser-452 and Ser-455. Phosphothreonine is present on Thr-472. Residue Tyr-542 is modified to Phosphotyrosine.

Belongs to the protein kinase superfamily. Ser/Thr protein kinase family. In terms of assembly, interacts in vitro with ROPGEF1 (via PRONE domain). Interacts weakly with the GRI peptide. As to expression, expressed in pollen and/or in flowers, but not in leaves.

It is found in the membrane. The enzyme catalyses L-seryl-[protein] + ATP = O-phospho-L-seryl-[protein] + ADP + H(+). It carries out the reaction L-threonyl-[protein] + ATP = O-phospho-L-threonyl-[protein] + ADP + H(+). Its function is as follows. Receptor-like kinase involved in the control of pollen germination and pollen tube polar growth. Can phosphorylate ROPGEF1 in vitro. This is Pollen receptor-like kinase 4 from Arabidopsis thaliana (Mouse-ear cress).